We begin with the raw amino-acid sequence, 345 residues long: MTDKTSLSYKDAGVDIDAGNALVERIKGVSKRTRRPEVLGGLGGFGALCQIPAGYKEPVLVSGTDGVGTKLRLAIDLKKHDTVGIDLVAMCVNDLIVQGAEPLFFLDYYATGKLDVDTAAAVVTGIGVGCEQSGCALVGGETAEMPGMYEGEDYDIAGFCVGVVEKSEIIDGSKVGDGDALIALAASGPHSNGFSLVRKILEVSKADVHQPLGDTTLASALLEPTRIYVKPVLKLIKECEIHALSHITGGGFWENIPRVLPANTQAVIDEQSWQWPAVFSWLQQAGNVTRHEMYRTFNCGVGMIIALPADQLEKALTLLKAEGENAWHIGHIAKAVDGEEQVIIQ.

It belongs to the AIR synthase family.

It localises to the cytoplasm. It carries out the reaction 2-formamido-N(1)-(5-O-phospho-beta-D-ribosyl)acetamidine + ATP = 5-amino-1-(5-phospho-beta-D-ribosyl)imidazole + ADP + phosphate + H(+). It functions in the pathway purine metabolism; IMP biosynthesis via de novo pathway; 5-amino-1-(5-phospho-D-ribosyl)imidazole from N(2)-formyl-N(1)-(5-phospho-D-ribosyl)glycinamide: step 2/2. The sequence is that of Phosphoribosylformylglycinamidine cyclo-ligase from Aeromonas salmonicida (strain A449).